The following is a 154-amino-acid chain: Protein FasC (154 aa).

Belongs to the periplasmic pilus chaperone family.

Its function is as follows. Could be required for the biogenesis of a putative fimbria. This is Protein FasC (fasC) from Escherichia coli.